Here is a 658-residue protein sequence, read N- to C-terminus: MTSREQLVQHVLQELQEAVESEGLEGLVGAALEAKQVLSSFALPTRRGGGPGPQVLEVDSVALSLYPEDAPRNMLPLVCQGEGSLLFEAASLLLWGDAGLSLELRARTVVEMLLHRHYYLQGMIDSKVMLQAVRYSLRSEESPEMTSLPSATLEAIFDADVKATCFPSSFSNVWHLYALASVVQRNIYSIYPLRNLKIRPYFNRVIRPRRCDHTPATLHIMWAGQPLSGHLFRHQYFAPVVGLEEVEAESAHPGPAPLPPPAKTLELLNREPGLSYSHLGEHSSVTKSTFYRWRRQSQEHRQKVATRFSAKHFLQDSFHRGGVVPLQQFLQRFPEISRSTYYAWKHELVGSGACQALTPTEELTKLPERQVAEGLGCSSTAASSPGVVFMQRAKLYLEHCIALNTLVPYRCFKRRFPGISRSTYYNWRRKALRRNPSFKPVPALLESGPPQPVPVGEKALLPWKGGEVGEGAAKATGGGPPAPRAFLPLRVPLSRWQRRLRRAARKQVLGGHLPFCRFRLRYPSLSPSSFWVWKSLARSWPGSLSKLHIPAPTLGRGSRKEAEEKEAGRNVIAAVAPPEGTWPMAASPGQDPNGQVLVMDMLATTKFKAQAKLFLQKRFQSKSFPSYKEFSTLFPLTARSTYYMWKRALYDGLTLVDG.

Belongs to the vertnin family.

The protein resides in the nucleus. Acts as a transcription factor that regulates development of thoracic vertebrae. In Bos taurus (Bovine), this protein is Vertnin (VRTN).